Here is a 311-residue protein sequence, read N- to C-terminus: MQTFTMVLEEIWTSLFMWFFYALIPCLLTDEVAILPAPQNLSVLSTNMKHLLMWSPVIAPGETVYYSVEYQGEYESLYTSHIWIPSSWCSLTEGPECDVTDDITATVPYNLRVRATLGSQTSAWSILKHPFNRNSTILTRPGMEITKDGFHLVIELEDLGPQFEFLVAYWRREPGAEEHVKMVRSGGIPVHLETMEPGAAYCVKAQTFVKAIGRYSAFSQTECVEVQGEAIPLVLALFAFVGFMLILVVVPLFVWKMGRLLQYSCCPVVVLPDTLKITNSPQKLISCRREEVDACATAVMSPEELLRAWIS.

The first 29 residues, 1–29 (MQTFTMVLEEIWTSLFMWFFYALIPCLLT), serve as a signal peptide directing secretion. The Extracellular portion of the chain corresponds to 30 to 233 (DEVAILPAPQ…VEVQGEAIPL (204 aa)). Fibronectin type-III domains follow at residues 37–136 (APQN…RNST) and 144–228 (EITK…EVQG). N-linked (GlcNAc...) asparagine glycosylation occurs at N40. C89 and C97 are oxidised to a cystine. N134 carries N-linked (GlcNAc...) asparagine glycosylation. C202 and C223 are oxidised to a cystine. The chain crosses the membrane as a helical span at residues 234-254 (VLALFAFVGFMLILVVVPLFV). Topologically, residues 255–311 (WKMGRLLQYSCCPVVVLPDTLKITNSPQKLISCRREEVDACATAVMSPEELLRAWIS) are cytoplasmic.

Belongs to the type II cytokine receptor family. As to quaternary structure, heterodimer with IL20RA and heterodimer with IL22RA1. In terms of tissue distribution, widely expressed with highest levels in skin and testis. Highly expressed in psoriatic skin.

The protein localises to the membrane. The IL20RA/IL20RB dimer is a receptor for IL19, IL20 and IL24. The IL22RA1/IL20RB dimer is a receptor for IL20 and IL24. The polypeptide is Interleukin-20 receptor subunit beta (IL20RB) (Homo sapiens (Human)).